The primary structure comprises 793 residues: Transcription factor opdR (793 aa).

3 disordered regions span residues 1-29, 60-113, and 457-476; these read MAQD…DPCR, TASS…QSQN, and LDDE…QPSE. The segment at residues 25–53 is a DNA-binding region (zn(2)-C6 fungal-type); the sequence is CDPCRRRKVRCDRKFPCGQCERARTALQC.

Its subcellular location is the nucleus. Functionally, transcription factor; part of the gene cluster that mediates the biosynthesis of oxopyrrolidines, polyketide-amino acid hybrid compounds with feature structures of tetramic acid. This chain is Transcription factor opdR, found in Penicillium oxalicum (strain 114-2 / CGMCC 5302) (Penicillium decumbens).